We begin with the raw amino-acid sequence, 415 residues long: Succinate--CoA ligase [GDP-forming] subunit beta, mitochondrial (415 aa).

A mitochondrion-targeting transit peptide spans 1–19; the sequence is MLRAAGNLSKSMMKSQRRF. Residues 28 to 258 form the ATP-grasp domain; that stretch reads KEILEKHGCS…SAAYRQKEIF (231 aa). Residues Gln-39, 72–74, and Val-130 each bind GTP; that span reads GRG. The Mg(2+) site is built by Asn-227 and Asp-241. Residues Asn-292 and 349 to 351 each bind substrate; that span reads GIV.

Belongs to the succinate/malate CoA ligase beta subunit family. GTP-specific subunit beta subfamily. Heterodimer of an alpha and a beta subunit. The beta subunit determines specificity for GTP. Requires Mg(2+) as cofactor.

Its subcellular location is the mitochondrion. It catalyses the reaction GTP + succinate + CoA = succinyl-CoA + GDP + phosphate. It functions in the pathway carbohydrate metabolism; tricarboxylic acid cycle; succinate from succinyl-CoA (ligase route): step 1/1. Its function is as follows. GTP-specific succinyl-CoA synthetase functions in the citric acid cycle (TCA), coupling the hydrolysis of succinyl-CoA to the synthesis of GTP and thus represents the only step of substrate-level phosphorylation in the TCA. The beta subunit provides nucleotide specificity of the enzyme and binds the substrate succinate, while the binding sites for coenzyme A and phosphate are found in the alpha subunit. The sequence is that of Succinate--CoA ligase [GDP-forming] subunit beta, mitochondrial from Caenorhabditis elegans.